Consider the following 274-residue polypeptide: Kit ligand (274 aa).

The N-terminal stretch at methionine 1–threonine 25 is a signal peptide. Over lysine 26–glutamine 215 the chain is Extracellular. 2 cysteine pairs are disulfide-bonded: cysteine 29/cysteine 114 and cysteine 68/cysteine 164. Asparagine 90, asparagine 97, asparagine 145, asparagine 196, and asparagine 207 each carry an N-linked (GlcNAc...) asparagine glycan. Residues tryptophan 216 to tryptophan 238 form a helical membrane-spanning segment. Residues lysine 239 to valine 274 lie on the Cytoplasmic side of the membrane.

This sequence belongs to the SCF family. As to quaternary structure, homodimer, non-covalently linked. In terms of processing, a soluble form is produced by proteolytic processing of the extracellular domain.

Its subcellular location is the cytoplasm. The protein localises to the cytoskeleton. It localises to the cell membrane. The protein resides in the cell projection. It is found in the lamellipodium. Its subcellular location is the filopodium. The protein localises to the secreted. In terms of biological role, stimulates the proliferation of mast cells. Able to augment the proliferation of both myeloid and lymphoid hematopoietic progenitors in bone marrow culture. Also mediates cell-cell adhesion. Acts synergistically with other cytokines, probably interleukins. The polypeptide is Kit ligand (KITLG) (Equus caballus (Horse)).